Here is an 853-residue protein sequence, read N- to C-terminus: DNA mismatch repair protein MutS (853 aa).

Residue 614-621 coordinates ATP; sequence GPNMGGKS.

Belongs to the DNA mismatch repair MutS family.

Its function is as follows. This protein is involved in the repair of mismatches in DNA. It is possible that it carries out the mismatch recognition step. This protein has a weak ATPase activity. The sequence is that of DNA mismatch repair protein MutS from Citrobacter koseri (strain ATCC BAA-895 / CDC 4225-83 / SGSC4696).